Consider the following 303-residue polypeptide: Probable phytol kinase, chloroplastic (303 aa).

The transit peptide at 1-49 (MAAAAAWTGAASPNSLLLSRSPPHAAALAPSPGSSMRRRLLLGVGTPAV) directs the protein to the chloroplast. Transmembrane regions (helical) follow at residues 98–118 (VVHV…SNST), 122–144 (YFAA…RLYT), 168–188 (YVLV…IGIV), 227–247 (FISG…LGYI), 254–274 (ALGK…VPVT), and 276–296 (VVDD…LLFS).

It belongs to the polyprenol kinase family.

The protein resides in the plastid. It localises to the chloroplast membrane. The enzyme catalyses phytol + CTP = phytyl phosphate + CDP + H(+). It participates in cofactor biosynthesis; tocopherol biosynthesis. Functionally, involved in the activation and reutilization of phytol from chlorophyll degradation in plant metabolism, including tocopherol biosynthesis. Catalyzes the conversion of phytol to phytol monophosphate (PMP). In Zea mays (Maize), this protein is Probable phytol kinase, chloroplastic.